The sequence spans 457 residues: Aromatic amino acid permease FywP (457 aa).

Transmembrane regions (helical) follow at residues 16 to 36 (IVML…SGKV), 43 to 63 (SVLL…YGVG), 91 to 111 (FADW…EAGV), 114 to 134 (FLAI…VAVL), 154 to 174 (AFIK…LLVI), 205 to 225 (GFLT…LAAI), 243 to 263 (GVLI…LHLL), 292 to 312 (IVLV…IYAT), 342 to 362 (NAIL…AVLG), 373 to 393 (ISFT…VLYF), 403 to 423 (VKLA…MQII), and 424 to 444 (TNPW…YFSY).

It belongs to the amino acid-polyamine-organocation (APC) superfamily. Amino acid transporter (AAT) (TC 2.A.3.1) family.

It is found in the cell membrane. Functionally, involved in phenylalanine and tyrosine uptake. Also has affinity for tryptophan. Plays no significant role in the excretion of accumulated phenylalanine. In Lactococcus lactis subsp. cremoris (strain MG1363), this protein is Aromatic amino acid permease FywP.